The chain runs to 207 residues: Large ribosomal subunit protein uL4 (207 aa).

The tract at residues 44-71 (RRQGTQSAKTRAEVRGGGRKPWKQKGTG) is disordered. Over residues 60–71 (GGRKPWKQKGTG) the composition is skewed to basic residues.

Belongs to the universal ribosomal protein uL4 family. In terms of assembly, part of the 50S ribosomal subunit.

One of the primary rRNA binding proteins, this protein initially binds near the 5'-end of the 23S rRNA. It is important during the early stages of 50S assembly. It makes multiple contacts with different domains of the 23S rRNA in the assembled 50S subunit and ribosome. In terms of biological role, forms part of the polypeptide exit tunnel. In Alkaliphilus oremlandii (strain OhILAs) (Clostridium oremlandii (strain OhILAs)), this protein is Large ribosomal subunit protein uL4.